Consider the following 256-residue polypeptide: MAVGKNKRLSKGKKGLKKKAQDPFTRKDWYGIKAPAPFAIRDVGKTLVNRTTGLKNANDALKGRIVEVSLADLQKDEDHSFRKIKLRVDEVQGKNCLTNFHGLDFTSDKLRSLVRKWQTLIEANVTVMTTDHYLLRLFAIAFTKRRPNQIKKTTYAATSQIRAIRRKMTEIIQREASSCTLTQLTSKLIPEVIGREIEKATQGIYPLQNVHIRKVKLLKQPKFDLGALMTLHGESSTDEQGQKVEREFREQVLESV.

The span at 1-18 (MAVGKNKRLSKGKKGLKK) shows a compositional bias: basic residues. The disordered stretch occupies residues 1-20 (MAVGKNKRLSKGKKGLKKKA). N-acetylalanine; partial is present on A2.

This sequence belongs to the eukaryotic ribosomal protein eS1 family. Component of the small ribosomal subunit. Mature ribosomes consist of a small (40S) and a large (60S) subunit. The 40S subunit contains about 33 different proteins and 1 molecule of RNA (18S). The 60S subunit contains about 49 different proteins and 3 molecules of RNA (25S, 5.8S and 5S).

It localises to the cytoplasm. In Chaetomium globosum (strain ATCC 6205 / CBS 148.51 / DSM 1962 / NBRC 6347 / NRRL 1970) (Soil fungus), this protein is Small ribosomal subunit protein eS1.